The following is a 140-amino-acid chain: MKVFSTVLLAIVACCAVAEAKTFGKCELAKALANNGIAKASLPDWVCLVQNESAFSTSATNKNKNGSTDYGIFQINNKYWCDSGYGSNDCKIACKNLLNDDITDDIKCAKLIHKRHGFNAWYGWKNHCNGKKLPNVSSCF.

The signal sequence occupies residues 1-20 (MKVFSTVLLAIVACCAVAEA). Residues 21–140 (KTFGKCELAK…KKLPNVSSCF (120 aa)) enclose the C-type lysozyme domain. 4 disulfides stabilise this stretch: Cys-26/Cys-139, Cys-47/Cys-128, Cys-81/Cys-94, and Cys-90/Cys-108. Residues Glu-52 and Asp-69 contribute to the active site.

Belongs to the glycosyl hydrolase 22 family. Expressed in salivary glands and Malpighian tubules.

The catalysed reaction is Hydrolysis of (1-&gt;4)-beta-linkages between N-acetylmuramic acid and N-acetyl-D-glucosamine residues in a peptidoglycan and between N-acetyl-D-glucosamine residues in chitodextrins.. Functionally, lysozymes have primarily a bacteriolytic function; those in tissues and body fluids are associated with the monocyte-macrophage system and enhance the activity of immunoagents. The polypeptide is Lysozyme c-1 (Anopheles gambiae (African malaria mosquito)).